The sequence spans 593 residues: Arginine--tRNA ligase (593 aa).

The 'HIGH' region motif lies at 138 to 148 (ANPTGPLHVGH).

Belongs to the class-I aminoacyl-tRNA synthetase family. In terms of assembly, monomer.

The protein resides in the cytoplasm. The catalysed reaction is tRNA(Arg) + L-arginine + ATP = L-arginyl-tRNA(Arg) + AMP + diphosphate. The sequence is that of Arginine--tRNA ligase from Burkholderia lata (strain ATCC 17760 / DSM 23089 / LMG 22485 / NCIMB 9086 / R18194 / 383).